Here is a 460-residue protein sequence, read N- to C-terminus: Cobyrinate a,c-diamide synthase (460 aa).

The GATase cobBQ-type domain occupies 248–440 (KIAVARDAAF…THFHFGSSTK (193 aa)). C331 (nucleophile) is an active-site residue.

This sequence belongs to the CobB/CbiA family. It depends on Mg(2+) as a cofactor.

The catalysed reaction is cob(II)yrinate + 2 L-glutamine + 2 ATP + 2 H2O = cob(II)yrinate a,c diamide + 2 L-glutamate + 2 ADP + 2 phosphate + 2 H(+). Its pathway is cofactor biosynthesis; adenosylcobalamin biosynthesis; cob(II)yrinate a,c-diamide from sirohydrochlorin (anaerobic route): step 10/10. Functionally, catalyzes the ATP-dependent amidation of the two carboxylate groups at positions a and c of cobyrinate, using either L-glutamine or ammonia as the nitrogen source. The sequence is that of Cobyrinate a,c-diamide synthase from Priestia megaterium (Bacillus megaterium).